A 243-amino-acid polypeptide reads, in one-letter code: UPF0246 protein M28_Spy1772 (243 aa).

Belongs to the UPF0246 family.

The polypeptide is UPF0246 protein M28_Spy1772 (Streptococcus pyogenes serotype M28 (strain MGAS6180)).